The sequence spans 171 residues: Myosin regulatory light chain 12B (171 aa).

Thr-18 carries the phosphothreonine; by MLCK and ZIPK/DAPK3 modification. Ser-19 carries the post-translational modification Phosphoserine; by MLCK and ZIPK/DAPK3. EF-hand domains are found at residues 28–63, 97–132, and 133–168; these read SQIQ…LGKN, DPED…MGDR, and FTDE…GAKD. 4 residues coordinate Ca(2+): Asp-41, Asn-43, Asp-45, and Asp-52.

Myosin is a hexamer of 2 heavy chains and 4 light chains: interacts with myosin heavy chain MYO19. In terms of processing, phosphorylation increases the actin-activated myosin ATPase activity and thereby regulates the contractile activity. It is required to generate the driving force in the migration of the cells but not necessary for localization of myosin-2 at the leading edge. Phosphorylation is reduced following epigallocatechin-3-O-gallate treatment.

Functionally, myosin regulatory subunit that plays an important role in regulation of both smooth muscle and nonmuscle cell contractile activity via its phosphorylation. Phosphorylation triggers actin polymerization in vascular smooth muscle. Implicated in cytokinesis, receptor capping, and cell locomotion. This Bos taurus (Bovine) protein is Myosin regulatory light chain 12B (MYL12B).